The sequence spans 479 residues: Probable xyloglucan galactosyltransferase GT15 (479 aa).

Topologically, residues 1 to 20 are cytoplasmic; that stretch reads MKNNNSSSVSIENHPWKKKP. A helical; Signal-anchor for type II membrane protein membrane pass occupies residues 21 to 40; sequence TTLLLFLSLLSISLLLLRLS. At 41-479 the chain is on the lumenal side; that stretch reads QDKIILITTT…GIRRNEFKTD (439 aa). Asparagine 155, asparagine 242, asparagine 285, and asparagine 391 each carry an N-linked (GlcNAc...) asparagine glycan.

This sequence belongs to the glycosyltransferase 47 family. As to expression, expressed in roots, hypocotyls, cotyledons, leaves, stems and sepals.

The protein resides in the golgi apparatus membrane. Functionally, functions in xyloglucan synthesis by adding side chains to the xylosylated glucan backbone. Involved in the galactosylation of hemicellulose xyloglucan. This chain is Probable xyloglucan galactosyltransferase GT15, found in Arabidopsis thaliana (Mouse-ear cress).